A 353-amino-acid chain; its full sequence is MTIAIGKSSKEPKDLFDSMDDWLRRDRFVFVGWSGLLLFPTAYFALGGWFTGTTFVTSWYTHGLASSYLEGCNFLTAAVSTPANSLAHSLLLLWGPEAQGDFTRWCQLGGLWTFVALHGSFALIGFMLRQFELARSVQLRPYNAVAFSGPIAVFVSVFLIYPLGQSGWFFAPSFGVAAIFRFILFFQGFHNWTLNPFHMMGVAGVLGAALLCAIHGATVENTLFEDGDGANTFRAFNPTQSEETYSMVTANRFWSQIFGVAFSNKRWLHFFMLFVPVTGLWMSAIGVVGLALNLRAYDFVSQEIRAAEDPEFETFYTKNILLNEGIRAWMAAQDQPHENLVFPEEVLPRGNAL.

T2 carries the N-acetylthreonine modification. Phosphothreonine is present on T2. Residues 41–61 (TAYFALGGWFTGTTFVTSWYT) traverse the membrane as a helical segment. H118 serves as a coordination point for chlorophyll a. A helical transmembrane segment spans residues 125–141 (GFMLRQFELARSVQLRP). Pheophytin a is bound by residues Q130 and N143. A helical transmembrane segment spans residues 153-166 (VFVSVFLIYPLGQS). Residue H198 participates in chlorophyll a binding. The chain crosses the membrane as a helical span at residues 208-228 (AALLCAIHGATVENTLFEDGD). Residues H215 and F262 each contribute to the a plastoquinone site. Residue H215 participates in Fe cation binding. Residue H269 participates in Fe cation binding. The helical transmembrane segment at 279–295 (GLWMSAIGVVGLALNLR) threads the bilayer.

Belongs to the reaction center PufL/M/PsbA/D family. PSII is composed of 1 copy each of membrane proteins PsbA, PsbB, PsbC, PsbD, PsbE, PsbF, PsbH, PsbI, PsbJ, PsbK, PsbL, PsbM, PsbT, PsbX, PsbY, PsbZ, Psb30/Ycf12, at least 3 peripheral proteins of the oxygen-evolving complex and a large number of cofactors. It forms dimeric complexes. It depends on The D1/D2 heterodimer binds P680, chlorophylls that are the primary electron donor of PSII, and subsequent electron acceptors. It shares a non-heme iron and each subunit binds pheophytin, quinone, additional chlorophylls, carotenoids and lipids. There is also a Cl(-1) ion associated with D1 and D2, which is required for oxygen evolution. The PSII complex binds additional chlorophylls, carotenoids and specific lipids. as a cofactor.

The protein resides in the plastid. It localises to the chloroplast thylakoid membrane. The enzyme catalyses 2 a plastoquinone + 4 hnu + 2 H2O = 2 a plastoquinol + O2. Photosystem II (PSII) is a light-driven water:plastoquinone oxidoreductase that uses light energy to abstract electrons from H(2)O, generating O(2) and a proton gradient subsequently used for ATP formation. It consists of a core antenna complex that captures photons, and an electron transfer chain that converts photonic excitation into a charge separation. The D1/D2 (PsbA/PsbD) reaction center heterodimer binds P680, the primary electron donor of PSII as well as several subsequent electron acceptors. D2 is needed for assembly of a stable PSII complex. This Adiantum capillus-veneris (Maidenhair fern) protein is Photosystem II D2 protein.